Consider the following 314-residue polypeptide: HTH-type transcriptional regulator LeuO (314 aa).

The region spanning 22–79 (VDLNLLTVFDAVMQEQNITRAAHVLGMSQPAVSNAVARLKVMFNDELFVRYGRGIQPT) is the HTH lysR-type domain. A DNA-binding region (H-T-H motif) is located at residues 39-58 (ITRAAHVLGMSQPAVSNAVA).

It belongs to the LysR transcriptional regulatory family.

In terms of biological role, a global transcription factor. Activates transcription of the 9 following operons; yjjQ-bglJ, yjjP, acrEF, ybdO, yjcRQP, casABCDE12, rhsD-ybbC, fepE and gltF, in most cases it probably interferes with silencing by H-NS and activates transcription. Represses transcription of the 3 following operons; uxaCA, sdaCB and btsT. H-NS repression of the bgl operon, leading to the ability to metabolize some beta-glucosides. It also directly activates the bgl operon. Activation is H-NS and BglJ-RcsB independent. The protein is HTH-type transcriptional regulator LeuO (leuO) of Escherichia coli (strain K12).